Consider the following 199-residue polypeptide: Recombination protein RecR (199 aa).

Residues 56 to 71 (CAICGNVSEKETCGIC) form a C4-type zinc finger. One can recognise a Toprim domain in the interval 79–174 (ATICVVEEAK…RVTRLASGLP (96 aa)).

The protein belongs to the RecR family.

In terms of biological role, may play a role in DNA repair. It seems to be involved in an RecBC-independent recombinational process of DNA repair. It may act with RecF and RecO. This chain is Recombination protein RecR, found in Clavibacter michiganensis subsp. michiganensis (strain NCPPB 382).